Here is a 602-residue protein sequence, read N- to C-terminus: Elongation factor 4 (602 aa).

A tr-type G domain is found at 2–184 (NHIRNFSIIA…QIVAKVPAPR (183 aa)). Residues 14–19 (DHGKST) and 131–134 (NKMD) each bind GTP.

Belongs to the TRAFAC class translation factor GTPase superfamily. Classic translation factor GTPase family. LepA subfamily.

The protein localises to the cell inner membrane. It catalyses the reaction GTP + H2O = GDP + phosphate + H(+). Its function is as follows. Required for accurate and efficient protein synthesis under certain stress conditions. May act as a fidelity factor of the translation reaction, by catalyzing a one-codon backward translocation of tRNAs on improperly translocated ribosomes. Back-translocation proceeds from a post-translocation (POST) complex to a pre-translocation (PRE) complex, thus giving elongation factor G a second chance to translocate the tRNAs correctly. Binds to ribosomes in a GTP-dependent manner. The chain is Elongation factor 4 from Acidovorax ebreus (strain TPSY) (Diaphorobacter sp. (strain TPSY)).